Consider the following 45-residue polypeptide: MKCGRKRRRRRRHACKRKKRACKQRSSTIVRAHLVHRRRAARRCP.

The segment covering 1–23 (MKCGRKRRRRRRHACKRKKRACK) has biased composition (basic residues). Residues 1–26 (MKCGRKRRRRRRHACKRKKRACKQRS) form a disordered region.

In terms of tissue distribution, testis.

It localises to the nucleus. Its subcellular location is the chromosome. Functionally, protamines substitute for histones in the chromatin of sperm during the haploid phase of spermatogenesis. They compact sperm DNA into a highly condensed, stable and inactive complex. The sequence is that of Protamine Z2 from Scyliorhinus canicula (Small-spotted catshark).